Here is a 379-residue protein sequence, read N- to C-terminus: uncharacterized protein (379 aa).

29–36 is an ATP binding site; sequence GPLNSGKT.

The protein belongs to the archaeal ATPase family.

This is an uncharacterized protein from Methanocaldococcus jannaschii (strain ATCC 43067 / DSM 2661 / JAL-1 / JCM 10045 / NBRC 100440) (Methanococcus jannaschii).